A 757-amino-acid polypeptide reads, in one-letter code: E3 ubiquitin-protein ligase RNF12-B (757 aa).

The span at 1 to 10 (MESADSTGKG) shows a compositional bias: polar residues. 3 disordered regions span residues 1 to 29 (MESA…LDRE), 68 to 519 (LQQI…TYES), and 619 to 652 (EPAE…GGVT). The span at 11-21 (STEQSESQRQS) shows a compositional bias: low complexity. Composition is skewed to polar residues over residues 110–138 (SVRQ…NPNS) and 147–163 (INVN…SLDQ). 21 consecutive repeat copies span residues 197–202 (PESVDE), 203–208 (PVSVAE), 209–214 (PVSVAE), 215–220 (PVSVAE), 221–226 (PESVAE), 227–232 (PESVAA), 237–242 (PESVPE), 243–248 (PESVPE), 249–254 (PESVPE), 255–260 (PESVPE), 261–266 (PESVPE), 267–272 (PESVPE), 273–278 (PESVPE), 279–284 (PESVPE), 285–290 (PESVPE), 291–296 (PESVPE), 297–302 (PESVPE), 303–308 (PESVPE), 309–314 (PESIAE), 315–320 (PESVPV), and 321–326 (PESVPV). The segment at 197-326 (PESVDEPVSV…SVPVPESVPV (130 aa)) is 21 X 6 AA approximate repeats of P-[EV]-S-V-[PA]-[EV]. Low complexity predominate over residues 202-237 (EPVSVAEPVSVAEPVSVAEPESVAEPESVAASVPVP). Positions 245–313 (SVPEPESVPE…ESVPEPESIA (69 aa)) are enriched in acidic residues. A compositionally biased stretch (low complexity) spans 314–327 (EPESVPVPESVPVA). The segment covering 352 to 367 (RSPDQRRTRARTDRSR) has biased composition (basic and acidic residues). The segment covering 383 to 392 (HSSSQTVDAS) has biased composition (polar residues). Positions 408-424 (SSQVHSSSSNETEGSSR) are enriched in low complexity. A compositionally biased stretch (polar residues) spans 428–452 (HITARQQALGTEGQSQSTVHLSNPE). The span at 453–466 (SRSSSQTPQTDSPS) shows a compositional bias: low complexity. The segment covering 467-476 (NAETTGTGQR) has biased composition (polar residues). Residues 490–500 (RPGDYRQRDSI) show a composition bias toward basic and acidic residues. The segment covering 501–517 (ANRTRSRSQTPNNTVTY) has biased composition (polar residues). The RING-type; atypical zinc finger occupies 703 to 744 (CSVCITEYTEGNKLRKLPCSHEYHIHCIDRWLSENSTCPICR). The PDZ-binding signature appears at 754–757 (ESIV).

This sequence belongs to the RNF12 family. As to quaternary structure, forms homodimers through the C-terminal region. The N-terminus interacts with the homeobox of LIM/homeobox factor lhx1/lim1, with lhx3/lim3 and lhx5/lim5, and with the N-terminus of ldb1. As to expression, shows overlapping expression with lhx1/lim1 and ldb1 in the gastrula mesoderm, and expression overlaps with ldb1 throughout early embryogenesis. After gastrulation, expression is gradually restricted to tissues originated from the ectoderm, the neuroectoderm, neural crest and epidermis, and subsequently to the neural tube as well as the head and tailbud region.

It localises to the nucleus. It catalyses the reaction S-ubiquitinyl-[E2 ubiquitin-conjugating enzyme]-L-cysteine + [acceptor protein]-L-lysine = [E2 ubiquitin-conjugating enzyme]-L-cysteine + N(6)-ubiquitinyl-[acceptor protein]-L-lysine.. Its pathway is protein modification; protein ubiquitination. Functionally, acts as an E3 ubiquitin-protein ligase specific for ldb1, mediating ubiquitination and proteasome-dependent degradation of excess ldb1 in a RING-dependent manner. Does not degrade ldb1 bound to lhx1/lim1, nor lim1 itself and thus contributes to the establishment of proper ldb1-lhx1/lim1 stoichiometry and the formation of a ldb1-lhx1/lim1 complex. Interferes with Spemann organizer function and suppresses secondary axis formation induced by ldb1 and lhx1/lim1. This is E3 ubiquitin-protein ligase RNF12-B (rnf12-b) from Xenopus laevis (African clawed frog).